Reading from the N-terminus, the 210-residue chain is dITP/XTP pyrophosphatase (210 aa).

A substrate-binding site is contributed by 13 to 18 (THNPGK). Mg(2+) contacts are provided by Asp-45 and Asp-74. The Proton acceptor role is filled by Asp-74. Substrate-binding positions include Ser-75, 160–163 (FGYD), Lys-183, and 195–196 (HR).

Belongs to the HAM1 NTPase family. Homodimer. The cofactor is Mg(2+).

It catalyses the reaction XTP + H2O = XMP + diphosphate + H(+). The enzyme catalyses dITP + H2O = dIMP + diphosphate + H(+). The catalysed reaction is ITP + H2O = IMP + diphosphate + H(+). Functionally, pyrophosphatase that catalyzes the hydrolysis of nucleoside triphosphates to their monophosphate derivatives, with a high preference for the non-canonical purine nucleotides XTP (xanthosine triphosphate), dITP (deoxyinosine triphosphate) and ITP. Seems to function as a house-cleaning enzyme that removes non-canonical purine nucleotides from the nucleotide pool, thus preventing their incorporation into DNA/RNA and avoiding chromosomal lesions. This Rhodopseudomonas palustris (strain ATCC BAA-98 / CGA009) protein is dITP/XTP pyrophosphatase.